A 91-amino-acid chain; its full sequence is MTILGSISQIGSMKMGGSKSSFNGSSCGAGFGSNSSSSIISFFNPLLPVVAFISGTVTSITGLVAGALTGTVDGLGKGANTGILLGYTPNI.

Residues Asn23 and Asn34 are each glycosylated (N-linked (GlcNAc...) asparagine). Residues Leu46 to Leu68 form a helical membrane-spanning segment.

It is found in the membrane. The sequence is that of Protein sigN139 from Dictyostelium discoideum (Social amoeba).